Here is a 208-residue protein sequence, read N- to C-terminus: MTDCSRNETGALAERVGQVARKTRETDIAVTWRLDGAGRADVDTGVPFFDHMLDQIARHSLTDLTARAVGDLEIDAHHTVEDTGIALGQALRRALGDGRSIRRYGSAFVPFDETLAFAAVDVSGRPYLVFDAALPAQKVGNFDTELAEEFFRALAMNAGITLHLKVHYGRNTHHMIEGLFKAFARALGDAVARDPRVLGVPSTKGALF.

This sequence belongs to the imidazoleglycerol-phosphate dehydratase family.

The protein resides in the cytoplasm. The enzyme catalyses D-erythro-1-(imidazol-4-yl)glycerol 3-phosphate = 3-(imidazol-4-yl)-2-oxopropyl phosphate + H2O. The protein operates within amino-acid biosynthesis; L-histidine biosynthesis; L-histidine from 5-phospho-alpha-D-ribose 1-diphosphate: step 6/9. In Symbiobacterium thermophilum (strain DSM 24528 / JCM 14929 / IAM 14863 / T), this protein is Imidazoleglycerol-phosphate dehydratase.